Here is an 81-residue protein sequence, read N- to C-terminus: Photosystem I iron-sulfur center (81 aa).

4Fe-4S ferredoxin-type domains follow at residues 2–31 (SHSV…MIPW) and 39–68 (IAPA…VRVY). The [4Fe-4S] cluster site is built by Cys-11, Cys-14, Cys-17, Cys-21, Cys-48, Cys-51, Cys-54, and Cys-58.

In terms of assembly, the eukaryotic PSI reaction center is composed of at least 11 subunits. Requires [4Fe-4S] cluster as cofactor.

Its subcellular location is the plastid. It is found in the chloroplast thylakoid membrane. The catalysed reaction is reduced [plastocyanin] + hnu + oxidized [2Fe-2S]-[ferredoxin] = oxidized [plastocyanin] + reduced [2Fe-2S]-[ferredoxin]. Functionally, apoprotein for the two 4Fe-4S centers FA and FB of photosystem I (PSI); essential for photochemical activity. FB is the terminal electron acceptor of PSI, donating electrons to ferredoxin. The C-terminus interacts with PsaA/B/D and helps assemble the protein into the PSI complex. Required for binding of PsaD and PsaE to PSI. PSI is a plastocyanin-ferredoxin oxidoreductase, converting photonic excitation into a charge separation, which transfers an electron from the donor P700 chlorophyll pair to the spectroscopically characterized acceptors A0, A1, FX, FA and FB in turn. The protein is Photosystem I iron-sulfur center of Chloranthus spicatus (Chulantree).